A 509-amino-acid polypeptide reads, in one-letter code: Tyrosine-protein kinase STK (509 aa).

The span at 1–16 (MGPCCSKQTKALNNQP) shows a compositional bias: polar residues. Residues 1-23 (MGPCCSKQTKALNNQPDKSKSKD) form a disordered region. Glycine 2 is lipidated: N-myristoyl glycine. The SH3 domain maps to 59-120 (PGVTIFVALY…PSTYVAPEKS (62 aa)). One can recognise an SH2 domain in the interval 126-218 (WYFGDVKRAE…GLVCALTLPC (93 aa)). The 256-residue stretch at 240 to 495 (LRLNRKLGAG…LQGVLEDYFV (256 aa)) folds into the Protein kinase domain. Residues 246–254 (LGAGQFGEV) and lysine 268 each bind ATP. Aspartate 360 serves as the catalytic Proton acceptor. Phosphotyrosine; by autocatalysis is present on tyrosine 390.

It belongs to the protein kinase superfamily. Tyr protein kinase family. SRC subfamily.

It carries out the reaction L-tyrosyl-[protein] + ATP = O-phospho-L-tyrosyl-[protein] + ADP + H(+). The chain is Tyrosine-protein kinase STK (STK) from Hydra vulgaris (Hydra).